The chain runs to 796 residues: Putative aconitate hydratase, mitochondrial (796 aa).

Residues methionine 1–leucine 28 constitute a mitochondrion transit peptide. Substrate contacts are provided by residues glutamine 108 and aspartate 201–histidine 203. Residues cysteine 399, cysteine 462, and cysteine 465 each contribute to the [4Fe-4S] cluster site. Residues arginine 489 and arginine 494 each coordinate substrate. A disordered region spans residues glutamate 540–serine 569. A substrate-binding site is contributed by alanine 685–arginine 686.

This sequence belongs to the aconitase/IPM isomerase family.

It localises to the mitochondrion. Has no detectable activity towards cis-acontiate or cis-homoaconitate. This is Putative aconitate hydratase, mitochondrial (acoB) from Emericella nidulans (strain FGSC A4 / ATCC 38163 / CBS 112.46 / NRRL 194 / M139) (Aspergillus nidulans).